A 444-amino-acid polypeptide reads, in one-letter code: Glutamyl-tRNA reductase (444 aa).

Residues 49 to 52, serine 109, 114 to 116, and glutamine 120 contribute to the substrate site; these read TCNR and ETQ. Cysteine 50 functions as the Nucleophile in the catalytic mechanism. Residue 189–194 coordinates NADP(+); sequence GAGKMG.

It belongs to the glutamyl-tRNA reductase family. As to quaternary structure, homodimer.

The enzyme catalyses (S)-4-amino-5-oxopentanoate + tRNA(Glu) + NADP(+) = L-glutamyl-tRNA(Glu) + NADPH + H(+). The protein operates within porphyrin-containing compound metabolism; protoporphyrin-IX biosynthesis; 5-aminolevulinate from L-glutamyl-tRNA(Glu): step 1/2. Its function is as follows. Catalyzes the NADPH-dependent reduction of glutamyl-tRNA(Glu) to glutamate 1-semialdehyde (GSA). This is Glutamyl-tRNA reductase from Bacillus cereus (strain ATCC 14579 / DSM 31 / CCUG 7414 / JCM 2152 / NBRC 15305 / NCIMB 9373 / NCTC 2599 / NRRL B-3711).